Here is a 433-residue protein sequence, read N- to C-terminus: Steroid hormone receptor ERR2 (433 aa).

The segment at methionine 1–alanine 41 is disordered. Over residues histidine 32–alanine 41 the composition is skewed to low complexity. The tract at residues tyrosine 93–lysine 211 is interaction with NANOG. The nuclear receptor DNA-binding region spans lysine 100–lysine 186. NR C4-type zinc fingers lie at residues cysteine 103–cysteine 123 and cysteine 139–cysteine 163. The tract at residues proline 203–valine 433 is essential for ESRRB transcriptional activity and interaction with NCOA3. One can recognise an NR LBD domain in the interval proline 208 to lysine 432.

It belongs to the nuclear hormone receptor family. NR3 subfamily. Binds DNA as a monomer. Interacts with NR0B1; represses ESRRB activity at the GATA6 promoter. Interacts with NANOG; reciprocally modulates their transcriptional activities and activates POU5F1 expression. Interacts with NCOA3; mediates the interaction between ESRRB and RNA polymerase II complexes and allows NCOA3 corecruitment to ESRRB, KLF4, NANOG, and SOX2 enhancer regions to trigger ESRRB-dependent gene activation involved in self-renewal and pluripotency. Interacts with KDM1A; co-occupes the core set of ESRRB targets including ELF5 and EOMES. Interacts with the multiprotein complex Integrator, at least composed of INTS1, INTS2, INTS3, INTS4, INTS5, INTS6, INTS7, INTS8, INTS9/RC74, INTS10, INTS11/CPSF3L and INTS12; ESRRB is probably not a core component of the integrator complex and associates to integrator via its interaction with INTS1 and INTS9; attracts the transcriptional machinery. Interacts with JARID2. Interacts with POU5F1; recruits ESRRB near the POU5F1-SOX2 element in the NANOG proximal promoter leading to activation of NANOG expression; the interaction is DNA independent. Post-translationally, acetylated by PCAF/KAT2 (in vitro).

The protein localises to the nucleus. The protein resides in the cytoplasm. It localises to the chromosome. In terms of biological role, transcription factor that binds a canonical ESRRB recognition (ERRE) sequence 5'TCAAGGTCA-3' localized on promoter and enhancer of targets genes regulating their expression or their transcription activity. Plays a role, in a LIF independent manner, in maintainance of self-renewal and pluripotency of embryonic and trophoblast stem cells through different signaling pathways including FGF signaling pathway and Wnt signaling pathways. Involved in morula development (2-16 cells embryos) by acting as a regulator at the 8-cell stage. Upon FGF signaling pathway activation, interacts with KDM1A by directly binding to enhancer site of ELF5 and EOMES and activating their transcription leading to self-renewal of trophoblast stem cells. Also regulates expression of multiple rod-specific genes and is required for survival of this cell type. Plays a role as transcription factor activator of GATA6, NR0B1, POU5F1 and PERM1. Plays a role as transcription factor repressor of NFE2L2 transcriptional activity and ESR1 transcriptional activity. During mitosis remains bound to a subset of interphase target genes, including pluripotency regulators, through the canonical ESRRB recognition (ERRE) sequence, leading to their transcriptional activation in early G1 phase. Can coassemble on structured DNA elements with other transcription factors like SOX2, POU5F1, KDM1A and NCOA3 to trigger ESRRB-dependent gene activation. This mechanism, in the case of SOX2 corecruitment prevents the embryonic stem cells (ESCs) to epiblast stem cells (EpiSC) transition through positive regulation of NR0B1 that inhibits the EpiSC transcriptional program. Also plays a role inner ear development by controlling expression of ion channels and transporters and in early placentation. This is Steroid hormone receptor ERR2 from Rattus norvegicus (Rat).